We begin with the raw amino-acid sequence, 32 residues long: Delta-conotoxin-like CnVIB (32 aa).

Cystine bridges form between cysteine 3/cysteine 18, cysteine 10/cysteine 22, and cysteine 17/cysteine 27. A 4-hydroxyproline mark is found at proline 6 and proline 14.

The protein belongs to the conotoxin O1 superfamily. Expressed by the venom duct.

Its subcellular location is the secreted. In terms of biological role, delta-conotoxins bind to site 6 of voltage-gated sodium channels (Nav) and inhibit the inactivation process. This toxin acts on Nav1.4/SCN4A and Nav1.6/SCN8A (EC(50)=2.3 uM). In Conus consors (Singed cone), this protein is Delta-conotoxin-like CnVIB.